The following is a 154-amino-acid chain: MNAVQVKILNPKIGTDANFPMPTRATDGSAGIDLRACIDEPITIKAGETKLIGTGMAIYIADPNYAGIILPRSGLGHKHGIVLGNLVGLIDADYQGELMVSVWNRSDTDFVLNPAERMAQYMVVPVVRPSFQVVEEFNELSARGAGGFGHSGRQ.

Residues 72-74 (RSG), Asn-85, 89-91 (LID), and Met-99 each bind substrate.

This sequence belongs to the dUTPase family. The cofactor is Mg(2+).

It carries out the reaction dUTP + H2O = dUMP + diphosphate + H(+). It participates in pyrimidine metabolism; dUMP biosynthesis; dUMP from dCTP (dUTP route): step 2/2. This enzyme is involved in nucleotide metabolism: it produces dUMP, the immediate precursor of thymidine nucleotides and it decreases the intracellular concentration of dUTP so that uracil cannot be incorporated into DNA. The chain is Deoxyuridine 5'-triphosphate nucleotidohydrolase from Psychrobacter sp. (strain PRwf-1).